The following is a 305-amino-acid chain: Deoxyhypusine hydroxylase (305 aa).

2 HEAT-like PBS-type repeats span residues Leu54–Asp80 and Val87–Asp113. Fe cation-binding residues include His56, His89, and Glu90. The disordered stretch occupies residues Glu137–Lys160. HEAT-like PBS-type repeat units lie at residues Asp178–Cys204, Phe209–Lys235, and Val242–Asp268. Residues His211, His244, and Glu245 each coordinate Fe cation.

Belongs to the deoxyhypusine hydroxylase family. Fe(2+) is required as a cofactor.

The catalysed reaction is [eIF5A protein]-deoxyhypusine + AH2 + O2 = [eIF5A protein]-hypusine + A + H2O. It functions in the pathway protein modification; eIF5A hypusination. Catalyzes the hydroxylation of the N(6)-(4-aminobutyl)-L-lysine intermediate produced by deoxyhypusine synthase/DHPS on a critical lysine of the eukaryotic translation initiation factor 5A/eIF-5A. This is the second step of the post-translational modification of that lysine into an unusual amino acid residue named hypusine. Hypusination is unique to mature eIF-5A factor and is essential for its function. The protein is Deoxyhypusine hydroxylase (dohh) of Danio rerio (Zebrafish).